A 54-amino-acid chain; its full sequence is Potassium channel toxin alpha-KTx 14.2 (54 aa).

Residues 1–23 form the signal peptide; that stretch reads MKIFFAILLILAVCSMAIWTVNG. Intrachain disulfides connect cysteine 30–cysteine 46, cysteine 36–cysteine 51, and cysteine 40–cysteine 53.

It belongs to the short scorpion toxin superfamily. Potassium channel inhibitor family. Alpha-KTx 14 subfamily. Expressed by the venom gland.

The protein localises to the secreted. Its function is as follows. Inhibits potassium channels. May be active towards small conductance calcium-activated potassium channels (KCNN, SK), and less active towards voltage-gated potassium channels (Kv/KCN). The protein is Potassium channel toxin alpha-KTx 14.2 of Olivierus martensii (Manchurian scorpion).